Here is a 259-residue protein sequence, read N- to C-terminus: Expansin-B4 (259 aa).

The N-terminal stretch at 1 to 23 (MASSQRYFALLALFAVSLKFCYC) is a signal peptide. Asn-25 carries N-linked (GlcNAc...) asparagine glycosylation. An Expansin-like EG45 domain is found at 51-161 (GGACGYGSAV…KRAACLYRGT (111 aa)). Intrachain disulfides connect Cys-54–Cys-83, Cys-86–Cys-156, and Cys-91–Cys-97. Residues 174 to 255 (YYISFVVEYE…NWKPDESYRS (82 aa)) form the Expansin-like CBD domain.

This sequence belongs to the expansin family. Expansin B subfamily.

The protein localises to the secreted. It localises to the cell wall. The protein resides in the membrane. In terms of biological role, may cause loosening and extension of plant cell walls by disrupting non-covalent bonding between cellulose microfibrils and matrix glucans. No enzymatic activity has been found. This Arabidopsis thaliana (Mouse-ear cress) protein is Expansin-B4 (EXPB4).